The sequence spans 195 residues: Imidazoleglycerol-phosphate dehydratase (195 aa).

This sequence belongs to the imidazoleglycerol-phosphate dehydratase family.

It localises to the cytoplasm. It catalyses the reaction D-erythro-1-(imidazol-4-yl)glycerol 3-phosphate = 3-(imidazol-4-yl)-2-oxopropyl phosphate + H2O. It functions in the pathway amino-acid biosynthesis; L-histidine biosynthesis; L-histidine from 5-phospho-alpha-D-ribose 1-diphosphate: step 6/9. The chain is Imidazoleglycerol-phosphate dehydratase from Ruegeria pomeroyi (strain ATCC 700808 / DSM 15171 / DSS-3) (Silicibacter pomeroyi).